A 1367-amino-acid polypeptide reads, in one-letter code: DNA polymerase III PolC-type (1367 aa).

The 156-residue stretch at 358-513 folds into the Exonuclease domain; that stretch reads FVVLDFETTG…DDARVTAQVF (156 aa).

It belongs to the DNA polymerase type-C family. PolC subfamily.

The protein resides in the cytoplasm. The catalysed reaction is DNA(n) + a 2'-deoxyribonucleoside 5'-triphosphate = DNA(n+1) + diphosphate. Its function is as follows. Required for replicative DNA synthesis. This DNA polymerase also exhibits 3' to 5' exonuclease activity. In Thermotoga maritima (strain ATCC 43589 / DSM 3109 / JCM 10099 / NBRC 100826 / MSB8), this protein is DNA polymerase III PolC-type.